The chain runs to 283 residues: uncharacterized protein (283 aa).

The region spanning 172–270 (EAIRDYIDER…ERSPSEYRRQ (99 aa)) is the HTH araC/xylS-type domain. 2 DNA-binding regions (H-T-H motif) span residues 189–210 (ESVAQAFYISPNYLSHLFQKTG) and 237–260 (VKEVAHACGFVDSNYFCRLFRKNT).

This is an uncharacterized protein from Escherichia coli (strain K12).